We begin with the raw amino-acid sequence, 931 residues long: Isoleucine--tRNA ligase (931 aa).

Residues 57 to 67 (PYANGNIHIGH) carry the 'HIGH' region motif. Glutamate 555 contacts L-isoleucyl-5'-AMP. Positions 596 to 600 (KMSKS) match the 'KMSKS' region motif. Lysine 599 provides a ligand contact to ATP. Cysteine 890, cysteine 893, cysteine 910, and cysteine 913 together coordinate Zn(2+).

This sequence belongs to the class-I aminoacyl-tRNA synthetase family. IleS type 1 subfamily. In terms of assembly, monomer. Requires Zn(2+) as cofactor.

It localises to the cytoplasm. The catalysed reaction is tRNA(Ile) + L-isoleucine + ATP = L-isoleucyl-tRNA(Ile) + AMP + diphosphate. In terms of biological role, catalyzes the attachment of isoleucine to tRNA(Ile). As IleRS can inadvertently accommodate and process structurally similar amino acids such as valine, to avoid such errors it has two additional distinct tRNA(Ile)-dependent editing activities. One activity is designated as 'pretransfer' editing and involves the hydrolysis of activated Val-AMP. The other activity is designated 'posttransfer' editing and involves deacylation of mischarged Val-tRNA(Ile). The chain is Isoleucine--tRNA ligase from Limosilactobacillus reuteri subsp. reuteri (strain JCM 1112) (Lactobacillus reuteri).